A 158-amino-acid polypeptide reads, in one-letter code: Ribosome maturation factor RimP (158 aa).

This sequence belongs to the RimP family.

It localises to the cytoplasm. Required for maturation of 30S ribosomal subunits. The chain is Ribosome maturation factor RimP from Streptococcus uberis (strain ATCC BAA-854 / 0140J).